We begin with the raw amino-acid sequence, 411 residues long: ATP-dependent Clp protease ATP-binding subunit ClpX (411 aa).

The 49-residue stretch at Met1–Val49 folds into the ClpX-type ZB domain. Zn(2+) is bound by residues Cys8, Cys11, Cys30, and Cys33. ATP is bound at residue Pro115–Leu122.

It belongs to the ClpX chaperone family. In terms of assembly, component of the ClpX-ClpP complex. Forms a hexameric ring that, in the presence of ATP, binds to fourteen ClpP subunits assembled into a disk-like structure with a central cavity, resembling the structure of eukaryotic proteasomes.

Its function is as follows. ATP-dependent specificity component of the Clp protease. It directs the protease to specific substrates. Can perform chaperone functions in the absence of ClpP. This is ATP-dependent Clp protease ATP-binding subunit ClpX from Dictyoglomus thermophilum (strain ATCC 35947 / DSM 3960 / H-6-12).